A 187-amino-acid chain; its full sequence is Mitochondrial import receptor subunit TOM20-4 (187 aa).

Position 1 is an N-acetylmethionine (M1). The Cytoplasmic portion of the chain corresponds to 1 to 160 (MDMQNENERL…QKKTSEFKYD (160 aa)). One copy of the TPR repeat lies at 84–117 (LSFGFLSSDQTEASDNFEKASQFFQLAVEEQPES). A helical membrane pass occupies residues 161–178 (VFGWVILASYVVAWISFA). Topologically, residues 179–187 (NSQTPVSRQ) are mitochondrial intermembrane. The short motif at 179–187 (NSQTPVSRQ) is the AKR2A-binding sequence (ABS) required for mitochondrion outer membrane targeting element.

This sequence belongs to the Tom20 family. In terms of assembly, forms part of the preprotein translocase complex of the outer mitochondrial membrane (TOM complex) which consists of at least 6 different proteins (TOM5, TOM6, TOM7, TOM20, TOM22/TOM9 and TOM40). Interacts with a variety of mitochondrial precursor proteins. Interacts with AKR2A. Component of a mitochondrial large protein complex that contains, at least, MIC60, DGS1, TOM40, TOM20 proteins, and petC/RISP. The N-terminus is blocked. As to expression, expressed in roots, flowers, young cotyledons and leaves.

Its subcellular location is the mitochondrion outer membrane. Central component of the receptor complex responsible for the recognition and translocation of cytosolically synthesized mitochondrial preproteins. Together with TOM22 functions as the transit peptide receptor at the surface of the mitochondrion outer membrane and facilitates the movement of preproteins into the translocation pore. The polypeptide is Mitochondrial import receptor subunit TOM20-4 (Arabidopsis thaliana (Mouse-ear cress)).